Consider the following 141-residue polypeptide: Nucleoside triphosphatase NudI (141 aa).

Residues 1-141 enclose the Nudix hydrolase domain; it reads MRQRTIVCPL…RKTLRLKGLL (141 aa). A Nudix box motif is present at residues 38 to 59; sequence GGVEPGERIEEALRREIREELG.

It belongs to the Nudix hydrolase family. NudI subfamily. Monomer. Mg(2+) is required as a cofactor.

The catalysed reaction is a ribonucleoside 5'-triphosphate + H2O = a ribonucleoside 5'-phosphate + diphosphate + H(+). The enzyme catalyses a 2'-deoxyribonucleoside 5'-triphosphate + H2O = a 2'-deoxyribonucleoside 5'-phosphate + diphosphate + H(+). It catalyses the reaction dUTP + H2O = dUMP + diphosphate + H(+). It carries out the reaction dTTP + H2O = dTMP + diphosphate + H(+). The catalysed reaction is dCTP + H2O = dCMP + diphosphate + H(+). Catalyzes the hydrolysis of nucleoside triphosphates, with a preference for pyrimidine deoxynucleoside triphosphates (dUTP, dTTP and dCTP). The protein is Nucleoside triphosphatase NudI of Escherichia coli (strain ATCC 8739 / DSM 1576 / NBRC 3972 / NCIMB 8545 / WDCM 00012 / Crooks).